Reading from the N-terminus, the 284-residue chain is Interferon antagonist OPG039 (284 aa).

ANK repeat units follow at residues 29 to 58, 60 to 89, 93 to 122, 127 to 157, 159 to 188, and 192 to 221; these read NGHS…LKNL, DNEF…DDSQ, KGNT…RLMF, GWKT…PFDL, ILLS…STNT, and LFIP…NIYS.

It belongs to the orthopoxvirus OPG039 family.

It is found in the host cytoplasm. It localises to the host nucleus. In terms of biological role, inhibits antiviral activity induced by type I interferons. Does not block signal transduction of IFN, but is important to counter the host antiviral state induced by a pre-treatment with IFN. Plays a role in the inhibition of host NF-kappa-B activation by preventing the acetylation of the RELA/p65 subunit of NF-kappaB. The sequence is that of Interferon antagonist OPG039 (OPG039) from Cynomys gunnisoni (Gunnison's prairie dog).